Here is a 411-residue protein sequence, read N- to C-terminus: Keratin, type I cytoskeletal 12 (411 aa).

The head stretch occupies residues 1–42; the sequence is DHDYEFPGIQAFAGLGMGFGGSPGGGSLYLPSGNDGGLLSGS. Residues 43-78 form a coil 1A region; it reads EKETMQNLNDRLASYLDKVRALEDANAELENKIREW. One can recognise an IF rod domain in the interval 43 to 359; it reads EKETMQNLND…RLLDGEAQGD (317 aa). Positions 83-101 are linker 1; the sequence is GHGHGDCGPQHDYSKYHPL. Residues 102 to 193 are coil 1B; the sequence is IEDLRNKIIS…KNHEEELQSC (92 aa). The linker 12 stretch occupies residues 194–216; it reads RAGGPGEVSVEMDAAPGVDLTRL. The tract at residues 217 to 354 is coil 2; it reads LNDMRAQYEA…IETYRRLLDG (138 aa). Residues 355-411 are tail; it reads EAQGDGLDESSAMTGSRSQAQSIDSSKDPSKTRKIKTIVQEVVNGEVVSSQVQEIQN. A disordered region spans residues 356–387; it reads AQGDGLDESSAMTGSRSQAQSIDSSKDPSKTR. A compositionally biased stretch (polar residues) spans 365–378; sequence SAMTGSRSQAQSID.

Belongs to the intermediate filament family. In terms of assembly, heterotetramer of two type I and two type II keratins. Keratin-3 associates with keratin-12. Cornea specific. Associated mainly with all layers of the central corneal epithelium and also found in the suprabasal limbal epithelium.

Its function is as follows. Involved in corneal epithelium organization, integrity and corneal keratin expression. In Oryctolagus cuniculus (Rabbit), this protein is Keratin, type I cytoskeletal 12 (KRT12).